The sequence spans 270 residues: MNLAPSTCLLLLFLLDIAQALPVWDEEGHEEGHEEGDGDDFVDITTRILTSNNNTDQLLLEGDLVAPTNRNAMKCWSSSCFWKKASNGLVVIPYVISSEYSGGEVATIEGAMRAFNGKTCIRFVRRTNEYDFISVVSKTGCYSELGRKGGQQELSINRGGCMYSGIIQHELNHALGFQHEQTRSDRDSYVRINWENIIPASAYNFNKHDTNNLNTPYDYSSIMHYGRDAFSIAYGRDSITPIPNPNVPIGQRNGMSRWDITRINVLYNCR.

The N-terminal stretch at M1–A20 is a signal peptide. A propeptide spans L21–R70 (activation peptide). N-linked (GlcNAc...) asparagine glycosylation occurs at N53. A Peptidase M12A domain is found at N71–R270. Cystine bridges form between C75/C80, C120/C269, and C141/C161. H169 provides a ligand contact to Zn(2+). E170 is an active-site residue. H173 and H179 together coordinate Zn(2+).

The cofactor is Zn(2+).

The protein localises to the zymogen granule. It catalyses the reaction Hydrolysis of the inner layer of fish egg envelope. Also hydrolysis of casein and small molecule substrates such as succinyl-Leu-Leu-Val-Tyr-|-7-(4-methyl)coumarylamide.. Its function is as follows. Participates in the breakdown of the egg envelope, which is derived from the egg extracellular matrix, at the time of hatching. Thus allowing the newly hatched fish to swim free. HCE binds tightly to the egg envelope while it exerts the choriolytic swelling action. The sequence is that of High choriolytic enzyme 1 (hcea) from Oryzias latipes (Japanese rice fish).